A 175-amino-acid polypeptide reads, in one-letter code: Bifunctional protein PyrR (175 aa).

Residues 98–110 (VIIIDDVLYTGRT) carry the PRPP-binding motif.

It belongs to the purine/pyrimidine phosphoribosyltransferase family. PyrR subfamily. Homodimer and homohexamer; in equilibrium.

It carries out the reaction UMP + diphosphate = 5-phospho-alpha-D-ribose 1-diphosphate + uracil. In terms of biological role, regulates transcriptional attenuation of the pyrimidine nucleotide (pyr) operon by binding in a uridine-dependent manner to specific sites on pyr mRNA. This disrupts an antiterminator hairpin in the RNA and favors formation of a downstream transcription terminator, leading to a reduced expression of downstream genes. Also displays a weak uracil phosphoribosyltransferase activity which is not physiologically significant. The chain is Bifunctional protein PyrR from Staphylococcus carnosus (strain TM300).